A 248-amino-acid polypeptide reads, in one-letter code: Pyridoxine 5'-phosphate synthase (248 aa).

3-amino-2-oxopropyl phosphate is bound at residue N12. A 1-deoxy-D-xylulose 5-phosphate-binding site is contributed by 14–15 (DH). Position 23 (R23) interacts with 3-amino-2-oxopropyl phosphate. Residue H48 is the Proton acceptor of the active site. 2 residues coordinate 1-deoxy-D-xylulose 5-phosphate: R50 and H55. Catalysis depends on E75, which acts as the Proton acceptor. T105 is a binding site for 1-deoxy-D-xylulose 5-phosphate. Residue H196 is the Proton donor of the active site. 3-amino-2-oxopropyl phosphate-binding positions include G197 and 218–219 (GH).

Belongs to the PNP synthase family. As to quaternary structure, homooctamer; tetramer of dimers.

Its subcellular location is the cytoplasm. The enzyme catalyses 3-amino-2-oxopropyl phosphate + 1-deoxy-D-xylulose 5-phosphate = pyridoxine 5'-phosphate + phosphate + 2 H2O + H(+). It functions in the pathway cofactor biosynthesis; pyridoxine 5'-phosphate biosynthesis; pyridoxine 5'-phosphate from D-erythrose 4-phosphate: step 5/5. Functionally, catalyzes the complicated ring closure reaction between the two acyclic compounds 1-deoxy-D-xylulose-5-phosphate (DXP) and 3-amino-2-oxopropyl phosphate (1-amino-acetone-3-phosphate or AAP) to form pyridoxine 5'-phosphate (PNP) and inorganic phosphate. The chain is Pyridoxine 5'-phosphate synthase from Azotobacter vinelandii (strain DJ / ATCC BAA-1303).